The following is a 157-amino-acid chain: MSRKNKKIKKKIFIDTRYNSRIVAKFANRMMYDGKKSISESILYSSIDLLADKLEDSDKMAVFYKALDNIKPLVEVRSRRVGGATYQVPVEVREERREALAMKWIIFAARKSSGRSMKEKLSNELLNAYNSTGAAFKKKEDTHRMAEANKAFTHYRW.

Belongs to the universal ribosomal protein uS7 family. Part of the 30S ribosomal subunit. Contacts proteins S9 and S11.

In terms of biological role, one of the primary rRNA binding proteins, it binds directly to 16S rRNA where it nucleates assembly of the head domain of the 30S subunit. Is located at the subunit interface close to the decoding center, probably blocks exit of the E-site tRNA. The polypeptide is Small ribosomal subunit protein uS7 (Borrelia garinii subsp. bavariensis (strain ATCC BAA-2496 / DSM 23469 / PBi) (Borreliella bavariensis)).